A 212-amino-acid polypeptide reads, in one-letter code: Hevein-like preproprotein (212 aa).

Positions 1–21 (MKIRLSITIILLSYTVATVAG) are cleaved as a signal peptide. Residues 22–64 (QQCGRQGGGRTCPGNICCSQYGYCGTTADYCSPTNNCQSNCWG) form the Chitin-binding type-1 domain. 7 disulfides stabilise this stretch: Cys24–Cys39, Cys33–Cys45, Cys38–Cys52, Cys58–Cys62, Cys100–Cys132, Cys121–Cys155, and Cys135–Cys191. A Barwin domain is found at 72–193 (ESASNVRATY…VDYQFVDCGN (122 aa)).

As to quaternary structure, CB-HEL interacts strongly with a fungal fruiting body lectin.

The protein localises to the vacuole. Fungal growth inhibitors. Neither CB-HEL nor CD-HEL have chitinase activity, but both have antimicrobial activities. CD-HEL has RNase, but no DNase activity. The sequence is that of Hevein-like preproprotein (HEL) from Arabidopsis thaliana (Mouse-ear cress).